A 424-amino-acid chain; its full sequence is Protein CLP1 homolog 5 (424 aa).

Residues E16, T56, and 124–129 contribute to the ATP site; that span reads DSGKST.

The protein belongs to the Clp1 family. Clp1 subfamily. Forms a complex with cleavage and polyadenylation specificity factor (CPSF) subunits PCFS1, FIPS3 and CPSF30.

The protein localises to the nucleus. In terms of biological role, required for endonucleolytic cleavage during polyadenylation-dependent pre-mRNA 3'-end formation. This Arabidopsis thaliana (Mouse-ear cress) protein is Protein CLP1 homolog 5.